We begin with the raw amino-acid sequence, 426 residues long: Pannexin-1 (426 aa).

Residues 1-40 are Cytoplasmic-facing; the sequence is MAIAHLATEYVFSDFLLKEPTEPKFKGLRLELAVDKMVTC. Cys-40 carries the post-translational modification S-nitrosocysteine. A helical membrane pass occupies residues 41 to 61; the sequence is IAVGLPLLLISLAFAQEISIG. Residues 62 to 106 lie on the Extracellular side of the membrane; that stretch reads TQISCFSPSSFSWRQAAFVDSYCWAAVQQKSSLQSESGNLPLWLH. 2 disulfides stabilise this stretch: Cys-66-Cys-264 and Cys-84-Cys-245. A helical membrane pass occupies residues 107–127; that stretch reads KFFPYILLLFAILLYLPALFW. Residues 128–216 are Cytoplasmic-facing; it reads RFSAAPHLCS…HLIMKYISCR (89 aa). The residue at position 198 (Tyr-198) is a Phosphotyrosine. A helical transmembrane segment spans residues 217-237; the sequence is LVTFVVILLACIYLSYYFSLS. The Extracellular portion of the chain corresponds to 238 to 277; the sequence is SLSDEFLCSIKSGVLKNDSTIPDRFQCKLIAVGIFQLLSL. An N-linked (GlcNAc...) asparagine glycan is attached at Asn-254. The chain crosses the membrane as a helical span at residues 278 to 298; the sequence is INLIVYALLIPVVVYTFFIPF. The Cytoplasmic portion of the chain corresponds to 299–426; that stretch reads RQKTDILKVY…SRQRLLNPSC (128 aa). Cys-346 is subject to S-nitrosocysteine.

It belongs to the pannexin family. Homoheptameric. Post-translationally, S-nitrosylation inhibits channel currents and ATP release. N-glycosylation may play a role in cell surface targeting. Exists in three glycosylation states: non-glycosylated (GLY0), high-mannose glycosylated (GLY1), and fully mature glycosylated (GLY2). In terms of processing, phosphorylated at Tyr-198 by SRC. Phosphorylation activates ATP release. Constitutively phosphorylated in vascular smooth muscle cells. Post-translationally, cleaved by CASP3 and CASP7 during apoptosis. Cleavage opens the channel for the release of metabolites and induces plasma membrane permeability during apoptosis. As to expression, widely expressed, including in cartilage, skin, spleen and brain.

The protein localises to the cell membrane. Its subcellular location is the endoplasmic reticulum membrane. It catalyses the reaction chloride(in) = chloride(out). It carries out the reaction iodide(out) = iodide(in). The catalysed reaction is Ca(2+)(in) = Ca(2+)(out). The enzyme catalyses ATP(in) = ATP(out). It catalyses the reaction K(+)(in) = K(+)(out). It carries out the reaction Na(+)(in) = Na(+)(out). The catalysed reaction is nitrate(in) = nitrate(out). The enzyme catalyses L-aspartate(out) = L-aspartate(in). It catalyses the reaction L-glutamate(out) = L-glutamate(in). It carries out the reaction D-gluconate(in) = D-gluconate(out). The catalysed reaction is spermidine(in) = spermidine(out). Functionally, ion channel involved in a variety of physiological functions such as blood pressure regulation, apoptotic cell clearance and oogenesis. Forms anion-selective channels with relatively low conductance and an order of permeabilities: nitrate&gt;iodide&gt;chlroride&gt;&gt;aspartate=glutamate=gluconate. Can release ATP upon activation through phosphorylation or cleavage at C-terminus. May play a role as a Ca(2+)-leak channel to regulate ER Ca(2+) homeostasis. In terms of biological role, during apoptosis and after cleavage by caspases of the C-terminal tail, acts as a plasma membrane channel which mediates the regulated release of find-me signals, such as nucleotides ATP and UTP, and selective plasme membrane permeability. The protein is Pannexin-1 of Mus musculus (Mouse).